We begin with the raw amino-acid sequence, 348 residues long: Anthranilate phosphoribosyltransferase (348 aa).

5-phospho-alpha-D-ribose 1-diphosphate is bound by residues glycine 84, 87–88 (GD), threonine 92, 94–97 (NITT), 112–120 (KHGNRSVSS), and serine 124. Glycine 84 lines the anthranilate pocket. Threonine 96 is a Mg(2+) binding site. An anthranilate-binding site is contributed by asparagine 115. Arginine 170 provides a ligand contact to anthranilate. Residues aspartate 228 and glutamate 229 each contribute to the Mg(2+) site.

The protein belongs to the anthranilate phosphoribosyltransferase family. In terms of assembly, homodimer. Mg(2+) is required as a cofactor.

The catalysed reaction is N-(5-phospho-beta-D-ribosyl)anthranilate + diphosphate = 5-phospho-alpha-D-ribose 1-diphosphate + anthranilate. The protein operates within amino-acid biosynthesis; L-tryptophan biosynthesis; L-tryptophan from chorismate: step 2/5. Catalyzes the transfer of the phosphoribosyl group of 5-phosphorylribose-1-pyrophosphate (PRPP) to anthranilate to yield N-(5'-phosphoribosyl)-anthranilate (PRA). The sequence is that of Anthranilate phosphoribosyltransferase from Corynebacterium glutamicum (strain R).